Here is a 140-residue protein sequence, read N- to C-terminus: Putative transcription elongation factor S-II-like protein 349L (140 aa).

The TFIIS-type zinc-finger motif lies at 100–139 (GAIKCKCGSERVFSFSKQTRSGDESTSVFALCSSCKSKWV). Zn(2+)-binding residues include C104, C106, C131, and C134.

The protein belongs to the IIV-6 349L family.

The chain is Putative transcription elongation factor S-II-like protein 349L from Acheta domesticus (House cricket).